The primary structure comprises 147 residues: Ubiquitin-conjugating enzyme E2 5A (147 aa).

Residues 1 to 15 are compositionally biased toward basic and acidic residues; the sequence is MASKRIQKELKDLQK. The segment at 1-24 is disordered; sequence MASKRIQKELKDLQKDPPTSCSAG. In terms of domain architecture, UBC core spans 1–147; it reads MASKRIQKEL…ARTWTQRYAM (147 aa). Catalysis depends on Cys-85, which acts as the Glycyl thioester intermediate.

It belongs to the ubiquitin-conjugating enzyme family.

It catalyses the reaction S-ubiquitinyl-[E1 ubiquitin-activating enzyme]-L-cysteine + [E2 ubiquitin-conjugating enzyme]-L-cysteine = [E1 ubiquitin-activating enzyme]-L-cysteine + S-ubiquitinyl-[E2 ubiquitin-conjugating enzyme]-L-cysteine.. It functions in the pathway protein modification; protein ubiquitination. Functionally, E2 conjugating enzyme that associates with the E3 ubiquitin-protein ligase EL5 to mediate ubiquitination of target proteins. This chain is Ubiquitin-conjugating enzyme E2 5A (UBC5A), found in Oryza sativa subsp. japonica (Rice).